The sequence spans 125 residues: Probable growth factor FPV211 (125 aa).

Residues 1–48 (MKEPLIEVKREYNLIKTLTGKKFVVSTSIVVVLLIINMIFYGIRIHEL) form the signal peptide. Residues 80 to 120 (LFEKCKSKFNNFCIYGECMNIINLDKKFCICNKGYTGNRCD) enclose the EGF-like domain. 3 disulfide bridges follow: Cys-84/Cys-97, Cys-92/Cys-108, and Cys-110/Cys-119.

The protein localises to the secreted. This chain is Probable growth factor FPV211, found in Vertebrata (FPV).